The chain runs to 355 residues: Mu-like prophage FluMu I protein (355 aa).

Belongs to the peptidase U35 family.

In terms of biological role, potential protease involved in virion morphogenesis. The chain is Mu-like prophage FluMu I protein from Haemophilus influenzae (strain ATCC 51907 / DSM 11121 / KW20 / Rd).